The sequence spans 310 residues: tRNA-cytidine(32) 2-sulfurtransferase (310 aa).

The PP-loop motif motif lies at serine 45–serine 50. [4Fe-4S] cluster is bound by residues cysteine 120, cysteine 123, and cysteine 211.

This sequence belongs to the TtcA family. In terms of assembly, homodimer. Requires Mg(2+) as cofactor. [4Fe-4S] cluster is required as a cofactor.

It is found in the cytoplasm. It catalyses the reaction cytidine(32) in tRNA + S-sulfanyl-L-cysteinyl-[cysteine desulfurase] + AH2 + ATP = 2-thiocytidine(32) in tRNA + L-cysteinyl-[cysteine desulfurase] + A + AMP + diphosphate + H(+). It functions in the pathway tRNA modification. Catalyzes the ATP-dependent 2-thiolation of cytidine in position 32 of tRNA, to form 2-thiocytidine (s(2)C32). The sulfur atoms are provided by the cysteine/cysteine desulfurase (IscS) system. This chain is tRNA-cytidine(32) 2-sulfurtransferase, found in Shewanella sp. (strain ANA-3).